A 265-amino-acid chain; its full sequence is tRNA pseudouridine synthase A (265 aa).

The active-site Nucleophile is the Asp-53. Tyr-111 provides a ligand contact to substrate.

Belongs to the tRNA pseudouridine synthase TruA family. Homodimer.

It catalyses the reaction uridine(38/39/40) in tRNA = pseudouridine(38/39/40) in tRNA. Formation of pseudouridine at positions 38, 39 and 40 in the anticodon stem and loop of transfer RNAs. In Acinetobacter baumannii (strain AB307-0294), this protein is tRNA pseudouridine synthase A.